The primary structure comprises 352 residues: Molybdenum import ATP-binding protein ModC (352 aa).

The 229-residue stretch at 1–229 (MLELNFSQTL…SVMNPWLPKE (229 aa)) folds into the ABC transporter domain. 31–38 (GVSGAGKT) lines the ATP pocket. The region spanning 289–352 (QTSIRNVLRA…AQIKSVSITA (64 aa)) is the Mop domain.

The protein belongs to the ABC transporter superfamily. Molybdate importer (TC 3.A.1.8) family. The complex is composed of two ATP-binding proteins (ModC), two transmembrane proteins (ModB) and a solute-binding protein (ModA).

Its subcellular location is the cell inner membrane. It carries out the reaction molybdate(out) + ATP + H2O = molybdate(in) + ADP + phosphate + H(+). Functionally, part of the ABC transporter complex ModABC involved in molybdenum import. Responsible for energy coupling to the transport system. In Escherichia coli O6:H1 (strain CFT073 / ATCC 700928 / UPEC), this protein is Molybdenum import ATP-binding protein ModC.